Reading from the N-terminus, the 305-residue chain is tRNA pseudouridine synthase B (305 aa).

Aspartate 48 (nucleophile) is an active-site residue.

This sequence belongs to the pseudouridine synthase TruB family. Type 1 subfamily.

It catalyses the reaction uridine(55) in tRNA = pseudouridine(55) in tRNA. Responsible for synthesis of pseudouridine from uracil-55 in the psi GC loop of transfer RNAs. This is tRNA pseudouridine synthase B from Pseudomonas syringae pv. syringae (strain B728a).